The sequence spans 141 residues: uncharacterized protein (141 aa).

The MaoC-like domain occupies 8 to 112 (IGQVFKTKSL…VLDKQPKRNE (105 aa)).

This is an uncharacterized protein from Bacillus subtilis (strain 168).